We begin with the raw amino-acid sequence, 174 residues long: 2-hydroxy-palmitic acid dioxygenase MPO1 (174 aa).

Topologically, residues 1–23 (MGEGLLDLRSQLGFYKFYHHNPK) are cytoplasmic. A helical transmembrane segment spans residues 24 to 44 (NVLIHSIFVPTILFSGSCMLH). Over 45 to 63 (RVKIYQSISLTAVLSVLFS) the chain is Lumenal. The chain crosses the membrane as a helical span at residues 64-84 (IFYCLLYLPTGLLAGVLLLLL). At 85 to 98 (NLALIDHRVDLTFK) the chain is on the cytoplasmic side. The helical transmembrane segment at 99–119 (QELGLFTIGWIFQFVGHGVFE) threads the bilayer. Residues 120–131 (KRRPALIDNLVQ) are Lumenal-facing. Residues 132 to 152 (SLVLAPYFIMFEFLFKLGFMP) form a helical membrane-spanning segment. Topologically, residues 153 to 174 (RLKATLEHDLEIKQRNLRMQRQ) are cytoplasmic.

The protein belongs to the MPO1 family. Requires Fe(2+) as cofactor.

Its subcellular location is the endoplasmic reticulum membrane. The catalysed reaction is (R)-2-hydroxyhexadecanoate + O2 = pentadecanoate + CO2 + H2O. In terms of biological role, dioxygenase that catalyzes the alpha-oxidation of 2-hydroxy fatty acids in an iron-dependent manner. Involved in metabolism of phytosphingosine and is required for proper endoplasmic reticulum stress response. The chain is 2-hydroxy-palmitic acid dioxygenase MPO1 from Saccharomyces cerevisiae (strain ATCC 204508 / S288c) (Baker's yeast).